The primary structure comprises 367 residues: Outer membrane protein assembly factor BamC (367 aa).

Positions 1–16 are cleaved as a signal peptide; that stretch reads MRLLPLFLMVTLAASG. Cys-17 carries the N-palmitoyl cysteine lipid modification. Cys-17 carries S-diacylglycerol cysteine lipidation.

Belongs to the BamC family. In terms of assembly, part of the Bam complex.

Its subcellular location is the cell outer membrane. Part of the outer membrane protein assembly complex, which is involved in assembly and insertion of beta-barrel proteins into the outer membrane. The chain is Outer membrane protein assembly factor BamC from Thiobacillus denitrificans (strain ATCC 25259 / T1).